The primary structure comprises 224 residues: 2-C-methyl-D-erythritol 4-phosphate cytidylyltransferase (224 aa).

This sequence belongs to the IspD/TarI cytidylyltransferase family. IspD subfamily.

The catalysed reaction is 2-C-methyl-D-erythritol 4-phosphate + CTP + H(+) = 4-CDP-2-C-methyl-D-erythritol + diphosphate. Its pathway is isoprenoid biosynthesis; isopentenyl diphosphate biosynthesis via DXP pathway; isopentenyl diphosphate from 1-deoxy-D-xylulose 5-phosphate: step 2/6. Functionally, catalyzes the formation of 4-diphosphocytidyl-2-C-methyl-D-erythritol from CTP and 2-C-methyl-D-erythritol 4-phosphate (MEP). The chain is 2-C-methyl-D-erythritol 4-phosphate cytidylyltransferase from Caldicellulosiruptor bescii (strain ATCC BAA-1888 / DSM 6725 / KCTC 15123 / Z-1320) (Anaerocellum thermophilum).